The primary structure comprises 84 residues: MAGRISAFLKNAWAKEPVLVVSFSVWGLAIIMPMISPYTKYASMINKATPYNYPVPVRDDGNMPDVPSHPQDPLGPSLDWLKNL.

A2 carries the post-translational modification N-acetylalanine. A helical transmembrane segment spans residues 19-39 (LVVSFSVWGLAIIMPMISPYT). The tract at residues 59 to 84 (DDGNMPDVPSHPQDPLGPSLDWLKNL) is disordered.

It belongs to the complex I NDUFA3 subunit family. Complex I is composed of 45 different subunits.

It localises to the mitochondrion inner membrane. Its function is as follows. Accessory subunit of the mitochondrial membrane respiratory chain NADH dehydrogenase (Complex I), that is believed not to be involved in catalysis. Complex I functions in the transfer of electrons from NADH to the respiratory chain. The immediate electron acceptor for the enzyme is believed to be ubiquinone. This Mus musculus (Mouse) protein is NADH dehydrogenase [ubiquinone] 1 alpha subcomplex subunit 3 (Ndufa3).